The following is a 287-amino-acid chain: tRNA uridine(34) hydroxylase (287 aa).

In terms of domain architecture, Rhodanese spans 132-226 (QGRPVVMLDT…YFEEVGGAHY (95 aa)). C186 (cysteine persulfide intermediate) is an active-site residue.

It belongs to the TrhO family.

It carries out the reaction uridine(34) in tRNA + AH2 + O2 = 5-hydroxyuridine(34) in tRNA + A + H2O. In terms of biological role, catalyzes oxygen-dependent 5-hydroxyuridine (ho5U) modification at position 34 in tRNAs. This chain is tRNA uridine(34) hydroxylase, found in Paraburkholderia phytofirmans (strain DSM 17436 / LMG 22146 / PsJN) (Burkholderia phytofirmans).